The sequence spans 143 residues: Large ribosomal subunit protein uL11 (143 aa).

It belongs to the universal ribosomal protein uL11 family. Part of the ribosomal stalk of the 50S ribosomal subunit. Interacts with L10 and the large rRNA to form the base of the stalk. L10 forms an elongated spine to which L12 dimers bind in a sequential fashion forming a multimeric L10(L12)X complex. In terms of processing, one or more lysine residues are methylated.

Forms part of the ribosomal stalk which helps the ribosome interact with GTP-bound translation factors. This is Large ribosomal subunit protein uL11 from Paraburkholderia phytofirmans (strain DSM 17436 / LMG 22146 / PsJN) (Burkholderia phytofirmans).